A 509-amino-acid polypeptide reads, in one-letter code: NADH dehydrogenase (509 aa).

The segment at 1–183 is membrane-binding; that stretch reads MVLDANIKAQ…YLNGESFGSG (183 aa). Positions 184-509 are catalytic; the sequence is RMTLEEILAK…LGAFDYLIRN (326 aa). FAD is bound at residue 210–241; it reads DVLVVGGGPAGASAAIYTARKGIRTGVVAERF. A disulfide bond links C337 and C340. 349–379 is a binding site for NAD(+); that stretch reads DVAVIGGGNSGIEAAIDLAGIVNHVTVLEFA. 469–479 lines the FAD pocket; sequence TSVPGLFAAGD.

This sequence belongs to the class-II pyridine nucleotide-disulfide oxidoreductase family. As to quaternary structure, homodimer. FAD is required as a cofactor.

The protein resides in the cell membrane. It catalyses the reaction a ubiquinone + NADH + 5 H(+)(in) = a ubiquinol + NAD(+) + 4 H(+)(out). Transfer of electrons from NADH to the respiratory chain. The immediate electron acceptor for the enzyme is believed to be ubiquinone. The polypeptide is NADH dehydrogenase (ahpF) (Bacillus subtilis (strain 168)).